Consider the following 344-residue polypeptide: MRVDLFDFDLPPENIALRPASPRDSARMLLVEGSEGALADRHVSDLPGLLRVGDCLVFNDTRVIPAQLEGRRGEARIGATLHKREGLRQWRAFVRNAKRVRTGDRIDFGAGVSAIAAERGEDGSILLDFEGDEPVELLLERAGTMPLPPYIAGKRPTDDRDRDDYQTMFAREKGAVAAPTAALHFTPRLMEALAAAGIASETLTLHVGAGTFLPVKADDTDDHRMHAEWGRIDAATADHLNAIRAAGGRVIAVGTTSLRLLESATGEDGVIRPFDGDTAIFITPGYRFRAIDGLMTNFHLPKSTLFMLVSALMGRDRMQAAYAHAIAEGYRFYSYGDSSLLLPG.

This sequence belongs to the QueA family. As to quaternary structure, monomer.

The protein localises to the cytoplasm. It carries out the reaction 7-aminomethyl-7-carbaguanosine(34) in tRNA + S-adenosyl-L-methionine = epoxyqueuosine(34) in tRNA + adenine + L-methionine + 2 H(+). It participates in tRNA modification; tRNA-queuosine biosynthesis. Transfers and isomerizes the ribose moiety from AdoMet to the 7-aminomethyl group of 7-deazaguanine (preQ1-tRNA) to give epoxyqueuosine (oQ-tRNA). This Rhizorhabdus wittichii (strain DSM 6014 / CCUG 31198 / JCM 15750 / NBRC 105917 / EY 4224 / RW1) (Sphingomonas wittichii) protein is S-adenosylmethionine:tRNA ribosyltransferase-isomerase.